A 335-amino-acid polypeptide reads, in one-letter code: Protein MET1, chloroplastic (335 aa).

Over residues 1 to 18 (MSLAPSSYPSLYSSPSLP) the composition is skewed to low complexity. 2 disordered regions span residues 1-29 (MSLA…NPSL) and 66-88 (SETE…KYET). Residues 1–73 (MSLAPSSYPS…KASETESSAK (73 aa)) constitute a chloroplast transit peptide. Positions 19-29 (RTQQTKQNPSL) are enriched in polar residues. Acidic residues predominate over residues 78 to 88 (GDGEEEEKYET). Positions 97–136 (YGLKFRKGRDGGTYIDAILPGGSADKTGKFTVGDRVIATS) constitute a PDZ domain. TPR repeat units follow at residues 217 to 250 (REKD…KPTP), 254 to 287 (SVAS…GYED), and 289 to 323 (KRIR…ESAI).

Interacts directly with stromal loops of photosystem II (PSII) core components psbB (CP47) and psbC (CP43). Associates with PSII subcomplexes formed during the PSII repair cycle (e.g. PSII dimers, PSII monomers, CP43-less PSII monomerand PSII reaction centers). Post-translationally, phosphorylated rapidly (e.g. within 5 minutes) but transiently at threonine and serine residues after wounding. Expressed in leaves (at protein level). Mostly expressed in leaves, stems and siliques, and, to a lower extent, in flowers and senescent leaves, but not present in roots (at protein level).

The protein localises to the plastid. It localises to the chloroplast membrane. The protein resides in the chloroplast thylakoid membrane. In terms of biological role, involved in photosystem II supercomplex formation and repair, probably acting as a psbB/psbC chaperone on the stromal side of the membrane. The protein is Protein MET1, chloroplastic of Arabidopsis thaliana (Mouse-ear cress).